The following is a 962-amino-acid chain: Cohesin subunit psc3 (962 aa).

The tract at residues 1-72 (MSESVTTGSD…GVNVKRSRRN (72 aa)) is disordered. Residues 21–30 (VMLSQSFDPM) are compositionally biased toward polar residues. A compositionally biased stretch (basic residues) spans 51-71 (SSKKRHPRPNSKGVNVKRSRR). Residues 236 to 275 (LCEKSKELLNEHAIATKQLEKEEKRSRVNRNRINELNNSL) adopt a coiled-coil conformation. One can recognise an SCD domain in the interval 297–382 (FVHRYRDVEP…SRFKERILEM (86 aa)).

Belongs to the SCC3 family. As to quaternary structure, cohesin complexes are composed of the psm1/smc1 and psm3/smc3 heterodimer attached via their hinge domain, rad21/scc1 which link them, and psc3/scc3, which interacts with rad21. Interacts with swi6. The interaction with swi6 may contribute to recruit cohesin complex to heterochromatin.

The protein resides in the nucleus. The protein localises to the chromosome. Its subcellular location is the centromere. In terms of biological role, component of cohesin complex, a complex required for the cohesion of sister chromatids after DNA replication. The cohesin complex apparently forms a large proteinaceous ring within which sister chromatids can be trapped. At anaphase, the rad21 subunit of the cohesin complex is cleaved and dissociates from chromatin, allowing sister chromatids to segregate. The cohesin complex may also play a role in spindle pole assembly during mitosis. The polypeptide is Cohesin subunit psc3 (psc3) (Schizosaccharomyces pombe (strain 972 / ATCC 24843) (Fission yeast)).